Here is a 621-residue protein sequence, read N- to C-terminus: Chaperone protein HtpG (621 aa).

An a; substrate-binding region spans residues 1-325 (MTDASVKETF…SQDLSLNVSR (325 aa)). Positions 326–541 (EMLQSDPKLA…EGDIDVNLER (216 aa)) are b. Positions 542–621 (MLKRHGQLQD…RLGSVMDSAL (80 aa)) are c.

It belongs to the heat shock protein 90 family. In terms of assembly, homodimer.

The protein localises to the cytoplasm. Its function is as follows. Molecular chaperone. Has ATPase activity. The polypeptide is Chaperone protein HtpG (Roseobacter denitrificans (strain ATCC 33942 / OCh 114) (Erythrobacter sp. (strain OCh 114))).